The chain runs to 249 residues: Probable transcriptional regulatory protein FN1661 (249 aa).

Residues 1-10 (MSGHSKWNNI) show a composition bias toward polar residues. Residues 1 to 20 (MSGHSKWNNIQHRKGAQDKK) form a disordered region.

Belongs to the TACO1 family.

It is found in the cytoplasm. The polypeptide is Probable transcriptional regulatory protein FN1661 (Fusobacterium nucleatum subsp. nucleatum (strain ATCC 25586 / DSM 15643 / BCRC 10681 / CIP 101130 / JCM 8532 / KCTC 2640 / LMG 13131 / VPI 4355)).